The chain runs to 624 residues: DNA mismatch repair protein MutL (624 aa).

Positions 355-377 are disordered; that stretch reads EESAPERKLPEKTPEPSYSPMKL. Residues 358–368 are compositionally biased toward basic and acidic residues; it reads APERKLPEKTP.

The protein belongs to the DNA mismatch repair MutL/HexB family.

Its function is as follows. This protein is involved in the repair of mismatches in DNA. It is required for dam-dependent methyl-directed DNA mismatch repair. May act as a 'molecular matchmaker', a protein that promotes the formation of a stable complex between two or more DNA-binding proteins in an ATP-dependent manner without itself being part of a final effector complex. This Bacillus velezensis (strain DSM 23117 / BGSC 10A6 / LMG 26770 / FZB42) (Bacillus amyloliquefaciens subsp. plantarum) protein is DNA mismatch repair protein MutL.